A 1493-amino-acid chain; its full sequence is Protein RNA-directed DNA methylation 3 (1493 aa).

Disordered stretches follow at residues 1–34 (MDRK…EGLR) and 54–96 (GYYG…SSFV). A Nuclear localization signal motif is present at residues 21 to 28 (KRKNSVEF). The segment covering 24 to 34 (NSVEFRDEGLR) has biased composition (basic and acidic residues). The segment covering 60-80 (SDEDDDGLGFLNDMEDEPEVE) has biased composition (acidic residues). Positions 81–92 (ESSKAGKGEKGK) are enriched in basic and acidic residues. One can recognise a KOW 1 domain in the interval 239–266 (KVSEGTWARVKNGKYKGDLAQIVAVSDT). The segment at 393 to 432 (PTCREGGKGEGSGGGKGEGSGGGKGEGSRGGKGEGSSDFK) is disordered. Residues 401–417 (GEGSGGGKGEGSGGGKG) are compositionally biased toward gly residues. Residues 418-432 (EGSRGGKGEGSSDFK) show a composition bias toward basic and acidic residues. Residues 501–528 (QISVNDVVKISKGPSEGKQGVVRQVYRG) enclose the KOW 2 domain. The tract at residues 578–602 (SSPKSPLSPEKEWQPRERYNSSNQG) is disordered. The span at 586 to 596 (PEKEWQPRERY) shows a compositional bias: basic and acidic residues. The KOW 3 domain maps to 607–634 (TYSIGQKLRIRVGPLKGYLCRVIALRYS). Disordered regions lie at residues 692-711 (IGAG…PSTD), 728-747 (EKNP…TVAD), and 757-1493 (AAEN…KTGW). Repeat unit 1 spans residues 732–741 (WGGSKPTSDV). The 42 X 9 AA approximate WG/GW-rich tandem repeats stretch occupies residues 732–1493 (WGGSKPTSDV…WGTGDKKTGW (762 aa)). A compositionally biased stretch (low complexity) spans 757-767 (AAENKPASASD). 37 tandem repeats follow at residues 775-784 (WGKTPASEAG), 789-797 (WGDTSASNV), 818-827 (WGTHGGSSGG), 836-845 (WGKLCEASES), 854-863 (WGKKGGSDGE), 866-875 (WGNKDGNSSA), 883-892 (WGQQDKGSDE), 917-926 (GWNKSAEDSN), 935-943 (WGQPNDGSS), 944-953 (WGKKGDGAAS), 954-962 (WGKKDDGGS), 963-972 (WGKKDDGNKD), 978-987 (WGKKDDGQKD), 1003-1012 (WGKKDDGGSS), 1013-1022 (WGKKDDGGSL), 1023-1032 (WGKKDDGGSS), 1033-1042 (WGKEDDGGSL), 1043-1052 (WGKKDDGESS), 1053-1062 (WGKKDDGESS), 1063-1072 (WGKKDDGGSS), 1073-1082 (WGKKDEGGYS), 1132-1141 (WGKQDGDGGG), 1144-1153 (WGKENDAGGG), 1156-1165 (WGKQDNGVGS), 1167-1176 (WGKQNDGSGG), 1180-1189 (WGKQNDAGGG), 1192-1201 (WGKQDSGGDG), 1204-1213 (WGKQDGGGDS), 1217-1226 (WGKQNNTSGG), 1229-1238 (WGKQSDAGGG), 1241-1250 (WGKQDGGGGG), 1253-1262 (WGKQDGGGGS), 1266-1275 (WGKQNETSNG), 1278-1287 (WGKQNDSGGG), 1290-1299 (WGKQDGGGGG), 1302-1311 (WGKQNDGGGG), and 1314-1323 (WGKQGDGGSK). The segment covering 790 to 812 (GDTSASNVEASSWEKQGASTSNV) has biased composition (polar residues). Positions 846–860 (SQKKEESSWGKKGGS) are enriched in basic and acidic residues. The span at 866–875 (WGNKDGNSSA) shows a compositional bias: polar residues. Positions 955 to 1090 (GKKDDGGSWG…YSEQTFDRGG (136 aa)) are enriched in basic and acidic residues. The span at 1122-1134 (PWSKPSGGSSWGK) shows a compositional bias: low complexity. Residues 1156–1172 (WGKQDNGVGSSWGKQND) show a composition bias toward polar residues. The span at 1186-1213 (AGGGSSWGKQDSGGDGSSWGKQDGGGDS) shows a compositional bias: gly residues. Positions 1218 to 1231 (GKQNNTSGGSSWGK) are enriched in polar residues. The span at 1235-1264 (AGGGSSWGKQDGGGGGSSWGKQDGGGGSGS) shows a compositional bias: gly residues. The span at 1270–1283 (NETSNGSSWGKQND) shows a compositional bias: polar residues. Gly residues predominate over residues 1284 to 1321 (SGGGSSWGKQDGGGGGSSWGKQNDGGGGSSWGKQGDGG). 2 stretches are compositionally biased toward polar residues: residues 1366–1382 (WKTD…QSGG) and 1392–1401 (DSNNSKPSGS). Copy 39 of the repeat occupies 1389–1398 (WGEDSNNSKP). Over residues 1416-1430 (NSKKETNDKPGDDSK) the composition is skewed to basic and acidic residues. A compositionally biased stretch (polar residues) spans 1432-1442 (AWGTSNDQVNT). 3 consecutive repeat copies span residues 1433–1442 (WGTSNDQVNT), 1467–1475 (WGGKTNAVA), and 1484–1493 (WGTGDKKTGW).

Interacts with AGO4 via its C-terminal region and with RNA transcripts. Binds chromatin at loci subject to transcriptional silencing downstream of RNA Polymerase V, but independently from the presence of 24-nt siRNA.

It localises to the nucleus. Its subcellular location is the nucleoplasm. Functionally, effector of RNA-directed DNA methylation (RdDM) triggered by small interfering RNAs (siRNAs, 24-nt RNAs). Functions as an adapter protein that binds scaffold transcripts generated by polymerase V and recruits AGO4 and AGO4-bound siRNAs to form an RdDM effector complex. Promotes the expression of 24-nt RNAs. Required for the initial establishment of DNA methylation. Together with AGO4, required for transcriptional gene silencing (TGS) by DNA methylation and repressive histone modifications (H3K9me2) of several chromatin loci. This chain is Protein RNA-directed DNA methylation 3, found in Arabidopsis thaliana (Mouse-ear cress).